A 312-amino-acid polypeptide reads, in one-letter code: ADIPOR-like receptor IZH4 (312 aa).

Residues 1 to 38 (MVSLTTIEQSPVKCETTTEKESNDTRGTDSNENAETKE) form a disordered region. At 1-64 (MVSLTTIEQS…YKNKSSRNES (64 aa)) the chain is on the cytoplasmic side. Residues 16 to 38 (TTTEKESNDTRGTDSNENAETKE) show a composition bias toward basic and acidic residues. A helical membrane pass occupies residues 65-85 (LVALIYLLGSMLSFCLLIFFT). Residues 86–101 (DFYLIPLFPTTTTMTD) are Lumenal-facing. The chain crosses the membrane as a helical span at residues 102 to 122 (YIVFNFYLLNVFVFCMVHFIY). Topologically, residues 123–141 (HFVKNISLQQHLEHWQKFS) are cytoplasmic. A helical membrane pass occupies residues 142–162 (YLSNINLLISSQITILYYLFY). Residues 163–165 (DYV) are Lumenal-facing. The helical transmembrane segment at 166-186 (FFFKIFTLLMNFIGLVAYFFI) threads the bilayer. Over 187–201 (LTDKLISSKRFNKTV) the chain is Cytoplasmic. A helical membrane pass occupies residues 202–222 (FFISVSVVCCSLPLLTAIITF). At 223–231 (DGLENLKER) the chain is on the lumenal side. A helical membrane pass occupies residues 232–252 (IKVNAITWELVALVAASIIYV). Residues 253–277 (TRFPESLFRRNKKEEGWNHSEYLFH) lie on the Cytoplasmic side of the membrane. Residues 278–298 (LLISGTAFYHFFILIQSYILM) form a helical membrane-spanning segment. The Lumenal portion of the chain corresponds to 299–312 (HSSLNQPELINFKS).

Belongs to the ADIPOR family.

The protein localises to the endoplasmic reticulum membrane. In terms of biological role, ADIPOR-like receptor involved in zinc metabolism either by altering membrane sterol content or by directly altering cellular zinc levels. The chain is ADIPOR-like receptor IZH4 (IZH4) from Saccharomyces cerevisiae (strain ATCC 204508 / S288c) (Baker's yeast).